We begin with the raw amino-acid sequence, 142 residues long: Large ribosomal subunit protein uL11 (142 aa).

This sequence belongs to the universal ribosomal protein uL11 family. As to quaternary structure, part of the ribosomal stalk of the 50S ribosomal subunit. Interacts with L10 and the large rRNA to form the base of the stalk. L10 forms an elongated spine to which L12 dimers bind in a sequential fashion forming a multimeric L10(L12)X complex. Post-translationally, one or more lysine residues are methylated.

Forms part of the ribosomal stalk which helps the ribosome interact with GTP-bound translation factors. The chain is Large ribosomal subunit protein uL11 from Pelotomaculum thermopropionicum (strain DSM 13744 / JCM 10971 / SI).